A 149-amino-acid chain; its full sequence is Protein OPG200 (149 aa).

Belongs to the orthopoxvirus OPG200 family. In terms of assembly, homodimers. Interacts with host IKBKB; this interaction inhibits host NF-kappa-B activation.

Its function is as follows. Contributes to virulence by binding to the host IKBKB subunit of the IKK complex and preventing host NF-kappa-B activation in response to pro-inflammatory stimuli such as TNF-alpha or IL1B. Mechanistically, sterically hinders the direct contact between the kinase domains of IKBKB in the IKK complex containing IKBKB, CHUK/IKKA and NEMO. In Vaccinia virus (strain Western Reserve) (VACV), this protein is Protein OPG200 (OPG200).